Consider the following 279-residue polypeptide: Polyamine aminopropyltransferase (279 aa).

The region spanning 4 to 237 is the PABS domain; the sequence is IEWYPRGYGV…SPWAFLVGIK (234 aa). Q29 contacts S-methyl-5'-thioadenosine. Residues H60 and D84 each coordinate spermidine. Residues E104 and 141–142 contribute to the S-methyl-5'-thioadenosine site; that span reads DG. D158 functions as the Proton acceptor in the catalytic mechanism. 158–161 contributes to the spermidine binding site; that stretch reads DSTD. P165 is an S-methyl-5'-thioadenosine binding site.

This sequence belongs to the spermidine/spermine synthase family. In terms of assembly, homodimer or homotetramer.

Its subcellular location is the cytoplasm. It carries out the reaction S-adenosyl 3-(methylsulfanyl)propylamine + putrescine = S-methyl-5'-thioadenosine + spermidine + H(+). It participates in amine and polyamine biosynthesis; spermidine biosynthesis; spermidine from putrescine: step 1/1. Catalyzes the irreversible transfer of a propylamine group from the amino donor S-adenosylmethioninamine (decarboxy-AdoMet) to putrescine (1,4-diaminobutane) to yield spermidine. The polypeptide is Polyamine aminopropyltransferase (Pyrococcus abyssi (strain GE5 / Orsay)).